The primary structure comprises 576 residues: Acetylcholine receptor subunit alpha-like 2 (576 aa).

The first 21 residues, 1–21 (MAPGCCTTRPRPIALLAHIWR), serve as a signal peptide directing secretion. Residues 22–261 (HCKPLCLLLV…FFNITLRRKT (240 aa)) lie on the Extracellular side of the membrane. N-linked (GlcNAc...) asparagine glycosylation is present at N65. Intrachain disulfides connect C169–C183 and C243–C244. N254 carries N-linked (GlcNAc...) asparagine glycosylation. A run of 3 helical transmembrane segments spans residues 262–285 (LFYT…VFYL), 293–311 (IALC…LLIS), and 327–346 (YLLF…IIIL). Over 347 to 526 (NIHYRKPSTH…WGFVAMVMDR (180 aa)) the chain is Cytoplasmic. A helical membrane pass occupies residues 527–545 (LFLWLFMIASLVGTFVILG). N570 carries an N-linked (GlcNAc...) asparagine glycan.

It belongs to the ligand-gated ion channel (TC 1.A.9) family. Acetylcholine receptor (TC 1.A.9.1) subfamily. As to expression, CNS in embryos.

The protein localises to the postsynaptic cell membrane. Its subcellular location is the cell membrane. Its function is as follows. After binding acetylcholine, the AChR responds by an extensive change in conformation that affects all subunits and leads to opening of an ion-conducting channel across the plasma membrane. This is Acetylcholine receptor subunit alpha-like 2 (nAChRalpha2) from Drosophila melanogaster (Fruit fly).